Reading from the N-terminus, the 350-residue chain is Selenide, water dikinase (350 aa).

C17 is a catalytic residue. Residues K20 and 48-50 (LFD) each bind ATP. Mg(2+) is bound at residue D51. Residues D68, D91, and 139–141 (GHS) each bind ATP. A Mg(2+)-binding site is contributed by D91. D229 lines the Mg(2+) pocket.

The protein belongs to the selenophosphate synthase 1 family. Class I subfamily. In terms of assembly, homodimer. The cofactor is Mg(2+).

It catalyses the reaction hydrogenselenide + ATP + H2O = selenophosphate + AMP + phosphate + 2 H(+). In terms of biological role, synthesizes selenophosphate from selenide and ATP. The polypeptide is Selenide, water dikinase (Bdellovibrio bacteriovorus (strain ATCC 15356 / DSM 50701 / NCIMB 9529 / HD100)).